Here is a 4830-residue protein sequence, read N- to C-terminus: Siderophore peptide synthetase fer3 (4830 aa).

Residues 197–623 are adenylation 1; it reads LDQAEKFPDR…LGRMNAEQVK (427 aa). The region spanning 751 to 833 is the Carrier 1 domain; the sequence is ANEDPVTQAL…DLIPLLSDTT (83 aa). An O-(pantetheine 4'-phosphoryl)serine modification is found at S788. The tract at residues 879-1317 is condensation 1; sequence QKIFPTTATQ…HSLMREPETT (439 aa). The adenylation 2 stretch occupies residues 1358–1781; sequence FENKAATEPE…IGRRDDLVKL (424 aa). Positions 1929-2005 constitute a Carrier 2 domain; sequence GEDGDLQCQV…MLIRGLATKT (77 aa). The residue at position 1966 (S1966) is an O-(pantetheine 4'-phosphoryl)serine. The segment at 2048–2503 is condensation 2; the sequence is IPCSTLQEGM…LLDQVVSLLT (456 aa). The tract at residues 2573 to 2977 is adenylation 3; sequence AGTPETACIN…LGRRDEQEKI (405 aa). Residues 3122 to 3198 enclose the Carrier 3 domain; the sequence is RPLSSLEREI…DIAAELSDSK (77 aa). S3159 is subject to O-(pantetheine 4'-phosphoryl)serine. Residues 3232 to 3621 form a condensation 3 region; it reads KVLPCLPSQE…RDRDELRISA (390 aa). Positions 3685–3760 constitute a Carrier 4 domain; that stretch reads TAAEEQIRDL…GLSKLLDQRQ (76 aa). S3720 carries the post-translational modification O-(pantetheine 4'-phosphoryl)serine. Positions 3779–4199 are condensation 4; it reads RYKATPLQAG…GVQIKAGASD (421 aa). One can recognise a Carrier 5 domain in the interval 4264 to 4340; the sequence is SLSTAEQDIV…RLTVATETRS (77 aa). S4301 is modified (O-(pantetheine 4'-phosphoryl)serine). Residues 4381–4708 are condensation 5; that stretch reads VLPLLTGQQQ…DLVSRAEHQQ (328 aa).

Belongs to the NRP synthetase family.

It participates in siderophore biosynthesis. In terms of biological role, nonribosomal peptide synthetase; part of the gene cluster that mediates the biosynthesis of siderophore ferrichrome A which is contributing to organismal virulence. The first step of ferrichrome A biosynthesis is performed by the HMG-CoA synthase hcs1 which catalyzes the generation of HMG-CoA and CoA using acetoacetyl-CoA and acetyl-CoA as substrates. The enoyl-CoA isomerase/hydratase fer4 then catalyzes the conversion of hcs1-produced HMG-CoA to methylglutaconyl-CoA. The acyltransferase fer5 then fuses the fer4-generated methylglutaconyl-CoA with sid1-generated hydroxyornithine to yield methylglutaconyl hydroxyornithine. Methylglutaconyl hydroxyornithine is then available for use by the NRPS fer3 to generate ferrichrome A. The polypeptide is Siderophore peptide synthetase fer3 (Mycosarcoma maydis (Corn smut fungus)).